We begin with the raw amino-acid sequence, 391 residues long: Tyrosinase-like protein phomQ2 (391 aa).

The interval methionine 1–glycine 21 is disordered. A helical membrane pass occupies residues isoleucine 61–isoleucine 81. Residues asparagine 97 and asparagine 141 are each glycosylated (N-linked (GlcNAc...) asparagine). Cu cation is bound by residues histidine 160 and histidine 169. N-linked (GlcNAc...) asparagine glycosylation is found at asparagine 204, asparagine 246, and asparagine 261. Cu cation-binding residues include histidine 298 and histidine 324. The N-linked (GlcNAc...) asparagine glycan is linked to asparagine 353.

Belongs to the tyrosinase family. Cu(2+) is required as a cofactor.

It localises to the membrane. Its pathway is mycotoxin biosynthesis. In terms of biological role, tyrosinase-like protein; part of the gene cluster that mediates the biosynthesis of the phomopsins, a group of hexapeptide mycotoxins which infects lupins and causes lupinosis disease in livestock. Within the pathway, phomQ2 is involved in the generation of the common 13-membered macrocycle, possibly by catalyzing the hydroxylation of Tyr. The pathway starts with the processing of the precursor phomA by several endopeptidases including kexin proteases as well as the cluster-specific S41 family peptidase phomP1 and the oligopeptidase phomG to produce 10 identical copies of the hexapeptide Tyr-Val-Ile-Pro-Ile-Asp. After being excised from the precursor peptide, the core peptides are cyclized and modified post-translationally by enzymes encoded within the gene cluster. The timing and order of proteolysis of the phomA precursor and PTMs are still unknown. Two tyrosinase-like enzymes, phomQ1 and phomQ2, catalyze the chlorination and hydroxylation of Tyr, respectively. PhomYb, is proposed to be involved in the construction of the macrocyclic structure. The other 4 ustYa family proteins may be involved in PTMs that generate the unique structure of phomopsin A. PhomYa is required for the hydroxylation of C-beta of Tyr. PhomYc, phomYd, and phomYe are responsible for the biosynthesis of 2,3-dehydroisoleucine (dIle), 2,3-dehydroaspartic acid (dAsp), and 3,4-dehydroproline (dPro), respectively. While dIle formation by phomYc is indispensable for the installation of dAsp by phomYd, the order of the other PTMs have not been elucidated yet. Most of the biosynthetic enzymes likely have broad substrate specificity, and thus, there might be a metabolic grid from a precursor to phomopsin A. The enzyme(s) responsible for the biosynthesis of 3,4-dehydrovaline (dVal) have also not been identified yet. Finally, phomM acts as an S-adenosylmethionine-dependent alpha-N-methyltransferase that catalyzes two successive N-methylation reactions, converting N-desmethyl-phomopsin A to phomopsin A and phomopsin A further to an N,N-dimethylated congener called phomopsin E. The sequence is that of Tyrosinase-like protein phomQ2 from Diaporthe leptostromiformis (Lupinosis disease fungus).